Reading from the N-terminus, the 412-residue chain is CCA-adding enzyme (412 aa).

ATP is bound by residues S41 and K44. CTP contacts are provided by S41 and K44. Residues D53, D55, and D106 each contribute to the Mg(2+) site. H129, K149, and Y158 together coordinate ATP. The CTP site is built by H129, K149, and Y158.

It belongs to the tRNA nucleotidyltransferase/poly(A) polymerase family. Archaeal CCA-adding enzyme subfamily. As to quaternary structure, homodimer. The cofactor is Mg(2+).

The enzyme catalyses a tRNA precursor + 2 CTP + ATP = a tRNA with a 3' CCA end + 3 diphosphate. It carries out the reaction a tRNA with a 3' CCA end + 2 CTP + ATP = a tRNA with a 3' CCACCA end + 3 diphosphate. In terms of biological role, catalyzes the addition and repair of the essential 3'-terminal CCA sequence in tRNAs without using a nucleic acid template. Adds these three nucleotides in the order of C, C, and A to the tRNA nucleotide-73, using CTP and ATP as substrates and producing inorganic pyrophosphate. tRNA 3'-terminal CCA addition is required both for tRNA processing and repair. Also involved in tRNA surveillance by mediating tandem CCA addition to generate a CCACCA at the 3' terminus of unstable tRNAs. While stable tRNAs receive only 3'-terminal CCA, unstable tRNAs are marked with CCACCA and rapidly degraded. The chain is CCA-adding enzyme from Saccharolobus islandicus (strain M.16.27) (Sulfolobus islandicus).